We begin with the raw amino-acid sequence, 543 residues long: Probable bifunctional tRNA threonylcarbamoyladenosine biosynthesis protein (543 aa).

The kae1 stretch occupies residues 1 to 329 (MDISKDLICI…YRSDMVEVNW (329 aa)). His-112, His-116, and Tyr-133 together coordinate Fe cation. Residues 133–137 (YVSGG), Asp-165, Gly-178, Glu-182, and Asn-262 contribute to the L-threonylcarbamoyladenylate site. Asp-290 contacts Fe cation. Positions 342-543 (IIPEHLIGKG…KEVEKRARYL (202 aa)) constitute a Protein kinase domain. Residues 348–356 (IGKGAEADI) and Lys-369 each bind ATP. The Proton acceptor; for kinase activity role is filled by Asp-461.

In the N-terminal section; belongs to the KAE1 / TsaD family. This sequence in the C-terminal section; belongs to the protein kinase superfamily. Tyr protein kinase family. BUD32 subfamily. As to quaternary structure, component of the KEOPS complex that consists of Kae1, Bud32, Cgi121 and Pcc1; the whole complex dimerizes. It depends on Fe(2+) as a cofactor.

The protein resides in the cytoplasm. The enzyme catalyses L-seryl-[protein] + ATP = O-phospho-L-seryl-[protein] + ADP + H(+). It catalyses the reaction L-threonyl-[protein] + ATP = O-phospho-L-threonyl-[protein] + ADP + H(+). It carries out the reaction L-threonylcarbamoyladenylate + adenosine(37) in tRNA = N(6)-L-threonylcarbamoyladenosine(37) in tRNA + AMP + H(+). Its function is as follows. Required for the formation of a threonylcarbamoyl group on adenosine at position 37 (t(6)A37) in tRNAs that read codons beginning with adenine. Is a component of the KEOPS complex that is probably involved in the transfer of the threonylcarbamoyl moiety of threonylcarbamoyl-AMP (TC-AMP) to the N6 group of A37. The Kae1 domain likely plays a direct catalytic role in this reaction. The Bud32 domain probably displays kinase activity that regulates Kae1 function. The protein is Probable bifunctional tRNA threonylcarbamoyladenosine biosynthesis protein of Methanococcus maripaludis (strain C6 / ATCC BAA-1332).